A 234-amino-acid polypeptide reads, in one-letter code: Large ribosomal subunit protein uL1 (234 aa).

Belongs to the universal ribosomal protein uL1 family. In terms of assembly, part of the 50S ribosomal subunit.

In terms of biological role, binds directly to 23S rRNA. The L1 stalk is quite mobile in the ribosome, and is involved in E site tRNA release. Its function is as follows. Protein L1 is also a translational repressor protein, it controls the translation of the L11 operon by binding to its mRNA. The polypeptide is Large ribosomal subunit protein uL1 (Helicobacter pylori (strain G27)).